A 355-amino-acid chain; its full sequence is uncharacterized protein (355 aa).

Belongs to the serpin family. Poxviruses subfamily.

This is an uncharacterized protein from Vertebrata (FPV).